The following is a 237-amino-acid chain: Proteasome subunit beta (237 aa).

Residues 1 to 27 (MSKFPDLPGMKNLDANPYEPELASFDD) are disordered. The propeptide at 1 to 42 (MSKFPDLPGMKNLDANPYEPELASFDDMDADAGDGDAVAKTG) is removed in mature form; by autocatalysis. Catalysis depends on Thr-43, which acts as the Nucleophile.

Belongs to the peptidase T1B family. In terms of assembly, the 20S proteasome core is composed of 14 alpha and 14 beta subunits that assemble into four stacked heptameric rings, resulting in a barrel-shaped structure. The two inner rings, each composed of seven catalytic beta subunits, are sandwiched by two outer rings, each composed of seven alpha subunits. The catalytic chamber with the active sites is on the inside of the barrel. Has a gated structure, the ends of the cylinder being occluded by the N-termini of the alpha-subunits. Is capped at one or both ends by the proteasome regulatory ATPase, PAN.

Its subcellular location is the cytoplasm. The enzyme catalyses Cleavage of peptide bonds with very broad specificity.. With respect to regulation, the formation of the proteasomal ATPase PAN-20S proteasome complex, via the docking of the C-termini of PAN into the intersubunit pockets in the alpha-rings, triggers opening of the gate for substrate entry. Interconversion between the open-gate and close-gate conformations leads to a dynamic regulation of the 20S proteasome proteolysis activity. Functionally, component of the proteasome core, a large protease complex with broad specificity involved in protein degradation. The chain is Proteasome subunit beta from Halomicrobium mukohataei (strain ATCC 700874 / DSM 12286 / JCM 9738 / NCIMB 13541) (Haloarcula mukohataei).